The sequence spans 174 residues: Large ribosomal subunit protein uL15 (174 aa).

Disordered regions lie at residues 1–57 (MKLH…QMRI) and 147–174 (PWVV…PQKA). The span at 21-35 (RGIGSGKGKTGGKGM) shows a compositional bias: gly residues.

Belongs to the universal ribosomal protein uL15 family. As to quaternary structure, part of the 50S ribosomal subunit.

Its function is as follows. Binds to the 23S rRNA. This is Large ribosomal subunit protein uL15 from Roseiflexus sp. (strain RS-1).